The following is a 161-amino-acid chain: Tropomyosin (161 aa).

The stretch at M1 to L161 forms a coiled coil. Residues E40–A52 are compositionally biased toward basic and acidic residues. Disordered regions lie at residues E40–K65 and E107–E134.

Homodimer.

Its subcellular location is the cytoplasm. The protein localises to the cytoskeleton. Functionally, forms part of the F-actin contractile ring during cytokinesis. This is Tropomyosin (cdc8) from Schizosaccharomyces pombe (strain 972 / ATCC 24843) (Fission yeast).